We begin with the raw amino-acid sequence, 331 residues long: Cathepsin S (331 aa).

A signal peptide spans 1-16 (MKWLVGLLPLCSYAVA). Residues 17 to 114 (QVHKDPTLDH…VTYRSNSNQK (98 aa)) constitute a propeptide, activation peptide. Asn104 carries N-linked (GlcNAc...) asparagine glycosylation. 4 cysteine pairs are disulfide-bonded: Cys126–Cys224, Cys136–Cys180, Cys170–Cys213, and Cys272–Cys320. Cys139 is an active-site residue. Residues His278 and Asn298 contribute to the active site.

The protein belongs to the peptidase C1 family.

Its subcellular location is the lysosome. It is found in the secreted. The protein resides in the cytoplasmic vesicle. It localises to the phagosome. The catalysed reaction is Similar to cathepsin L, but with much less activity on Z-Phe-Arg-|-NHMec, and more activity on the Z-Val-Val-Arg-|-Xaa compound.. Functionally, thiol protease. Key protease responsible for the removal of the invariant chain from MHC class II molecules and MHC class II antigen presentation. The bond-specificity of this proteinase is in part similar to the specificities of cathepsin L. This is Cathepsin S (CTSS) from Canis lupus familiaris (Dog).